A 288-amino-acid polypeptide reads, in one-letter code: tRNA dimethylallyltransferase (288 aa).

17 to 24 is an ATP binding site; the sequence is GPTASGKT. 19-24 lines the substrate pocket; that stretch reads TASGKT.

It belongs to the IPP transferase family. Monomer. The cofactor is Mg(2+).

The enzyme catalyses adenosine(37) in tRNA + dimethylallyl diphosphate = N(6)-dimethylallyladenosine(37) in tRNA + diphosphate. Functionally, catalyzes the transfer of a dimethylallyl group onto the adenine at position 37 in tRNAs that read codons beginning with uridine, leading to the formation of N6-(dimethylallyl)adenosine (i(6)A). In Jannaschia sp. (strain CCS1), this protein is tRNA dimethylallyltransferase.